The sequence spans 93 residues: Integration host factor subunit beta (93 aa).

The protein belongs to the bacterial histone-like protein family. Heterodimer of an alpha and a beta chain.

This protein is one of the two subunits of integration host factor, a specific DNA-binding protein that functions in genetic recombination as well as in transcriptional and translational control. The sequence is that of Integration host factor subunit beta from Glaesserella parasuis serovar 5 (strain SH0165) (Haemophilus parasuis).